Reading from the N-terminus, the 80-residue chain is Exodeoxyribonuclease 7 small subunit (80 aa).

Belongs to the XseB family. Heterooligomer composed of large and small subunits.

The protein resides in the cytoplasm. It catalyses the reaction Exonucleolytic cleavage in either 5'- to 3'- or 3'- to 5'-direction to yield nucleoside 5'-phosphates.. Functionally, bidirectionally degrades single-stranded DNA into large acid-insoluble oligonucleotides, which are then degraded further into small acid-soluble oligonucleotides. The protein is Exodeoxyribonuclease 7 small subunit of Vibrio campbellii (strain ATCC BAA-1116).